The primary structure comprises 217 residues: Pre-mRNA-splicing factor sap62 (217 aa).

A Matrin-type zinc finger spans residues 54 to 84; it reads FECRLCLTTHANENSYLTHTQGKKHQTNLAR.

This sequence belongs to the SF3A2 family. In terms of assembly, belongs to the 40S cdc5-associated complex (or cwf complex), a spliceosome sub-complex reminiscent of a late-stage spliceosome composed of the U2, U5 and U6 snRNAs and at least brr2, cdc5, cwf2/prp3, cwf3/syf1, cwf4/syf3, cwf5/ecm2, spp42/cwf6, cwf7/spf27, cwf8, cwf9, cwf10, cwf11, cwf12, prp45/cwf13, cwf14, cwf15, cwf16, cwf17, cwf18, cwf19, cwf20, cwf21, cwf22, cwf23, cwf24, cwf25, cwf26, cyp7/cwf27, cwf28, cwf29/ist3, lea1, msl1, prp5/cwf1, prp10, prp12/sap130, prp17, prp22, sap61, sap62, sap114, sap145, slu7, smb1, smd1, smd3, smf1, smg1 and syf2.

Its subcellular location is the nucleus. The protein localises to the cytoplasm. In terms of biological role, involved in mRNA splicing where it associates with cdc5 and the other cwf proteins as part of the spliceosome. This Schizosaccharomyces pombe (strain 972 / ATCC 24843) (Fission yeast) protein is Pre-mRNA-splicing factor sap62 (sap62).